The chain runs to 373 residues: LIM domain-binding protein 1 (373 aa).

2 disordered regions span residues 248 to 297 and 329 to 373; these read PPAE…LSSQ and DAAN…QASQ. The span at 266–282 shows a compositional bias: low complexity; it reads SGGSTMSSGGGNTNNSN. Positions 288 to 297 are enriched in polar residues; that stretch reads PASTFALSSQ. One can recognise an LIM interaction domain (LID) domain in the interval 298-337; that stretch reads DVMVVGEPTLMGGEFGDEDERLITRLENTQFDAANGIDDE.

This sequence belongs to the LDB family. As to quaternary structure, forms homodimers and heterodimers. Interacts with and activates lhx1/lim1. The stoichiometry of lhx1/lim1 and ldb1 is important for their function and an excess of ldb1 can inhibit lhx1/lim1 function. When bound to lhx1/lim1, escapes degradation by rnf12. Interacts with the N-terminal region of rnf12. Undergoes rnf12-mediated ubiquitin-proteasome-dependent degradation.

The protein resides in the nucleus. Its function is as follows. Binds to the LIM domain of a wide variety of LIM domain-containing transcription factors. Acts as a coactivator together with otx2 to stimulate lhx1/lim1-mediated activation of the gsc promoter in the Spemann organizer. Acts synergistically with lhx1/lim1 and ssbp in axis formation. The chain is LIM domain-binding protein 1 from Xenopus tropicalis (Western clawed frog).